The following is a 77-amino-acid chain: U3-theraphotoxin-Hhn1k (77 aa).

An N-terminal signal peptide occupies residues 1–14 (TFAGLVLLFVVCYA). The propeptide occupies 15–42 (SESEEKEFPKEMLSSIFAVDNDFKQEER). 2 cysteine pairs are disulfide-bonded: Cys44–Cys57 and Cys56–Cys69.

It belongs to the neurotoxin 10 (Hwtx-1) family. 51 (Hntx-8) subfamily. Hntx-8 sub-subfamily. As to expression, expressed by the venom gland.

It is found in the secreted. Ion channel inhibitor. The polypeptide is U3-theraphotoxin-Hhn1k (Cyriopagopus hainanus (Chinese bird spider)).